A 72-amino-acid polypeptide reads, in one-letter code: Translation initiation factor IF-1 (72 aa).

Residues 1–72 enclose the S1-like domain; the sequence is MAKEDMIEVE…TRGRITYRFK (72 aa).

Belongs to the IF-1 family. As to quaternary structure, component of the 30S ribosomal translation pre-initiation complex which assembles on the 30S ribosome in the order IF-2 and IF-3, IF-1 and N-formylmethionyl-tRNA(fMet); mRNA recruitment can occur at any time during PIC assembly.

The protein resides in the cytoplasm. Its function is as follows. One of the essential components for the initiation of protein synthesis. Stabilizes the binding of IF-2 and IF-3 on the 30S subunit to which N-formylmethionyl-tRNA(fMet) subsequently binds. Helps modulate mRNA selection, yielding the 30S pre-initiation complex (PIC). Upon addition of the 50S ribosomal subunit IF-1, IF-2 and IF-3 are released leaving the mature 70S translation initiation complex. This is Translation initiation factor IF-1 from Enterococcus faecalis (strain ATCC 700802 / V583).